We begin with the raw amino-acid sequence, 325 residues long: DNA-directed RNA polymerase subunit alpha (325 aa).

The segment at 1 to 238 is alpha N-terminal domain (alpha-NTD); the sequence is MSPKNLLKGF…DHLTVFINFE (238 aa). Residues 255–325 are alpha C-terminal domain (alpha-CTD); that stretch reads LKAALSKHVE…MGLSFGMRDF (71 aa).

The protein belongs to the RNA polymerase alpha chain family. In terms of assembly, homodimer. The RNAP catalytic core consists of 2 alpha, 1 beta, 1 beta' and 1 omega subunit. When a sigma factor is associated with the core the holoenzyme is formed, which can initiate transcription.

The catalysed reaction is RNA(n) + a ribonucleoside 5'-triphosphate = RNA(n+1) + diphosphate. In terms of biological role, DNA-dependent RNA polymerase catalyzes the transcription of DNA into RNA using the four ribonucleoside triphosphates as substrates. The sequence is that of DNA-directed RNA polymerase subunit alpha from Leptospira biflexa serovar Patoc (strain Patoc 1 / Ames).